Reading from the N-terminus, the 827-residue chain is Cell surface glycoprotein (827 aa).

A signal peptide spans 1-34; the sequence is MTKLKDQTRAILLATLMVTSVFAGAIAFTGSAAA. Residue asparagine 47 is glycosylated (N-linked (Glc...) asparagine). Residues 73 to 102 show a composition bias toward polar residues; sequence PLLTGTAGNSEGVSLDLSSPIPQTTENQPL. Residues 73-111 are disordered; that stretch reads PLLTGTAGNSEGVSLDLSSPIPQTTENQPLGTYDVDGSG. N-linked (Glc...) asparagine glycans are attached at residues asparagine 117, asparagine 308, asparagine 313, asparagine 532, and asparagine 766. A disordered region spans residues 755-804; that stretch reads SEREDTTTSSDNATDTTTTTDGPTETTTTAEPTETTEEPTEETTTSSNTP. Positions 761–787 are enriched in low complexity; that stretch reads TTSSDNATDTTTTTDGPTETTTTAEPT. The short motif at 804–806 is the PGF sorting signal element; sequence PGF. The chain crosses the membrane as a helical span at residues 804 to 823; it reads PGFGIAVALVALVGAALLAL.

It belongs to the halobacterial S-layer protein family. In terms of processing, O-glycosylated on 4 to 6 threonine residues; glycans consist of Glc-Gal disaccharides. The N-terminus is not blocked. Post-translationally, cleaved by the archaeosortase ArtA at the C-terminus, with removal of a short hydrophobic segment. In terms of processing, lipidation: Following protein translocation across the membrane, the protein is modified by a derivative of mevalonic acid. Lipid modification is ArtA-dependent and requires the conserved C-terminal PGF motif. Asn-47 and Asn-117 are glycosylated by a pentasaccharide comprising a hexose, 2 hexuronic acids, a methyl ester of a hexuronic acid and mannose. The pentasaccharide is produced in 2 steps: first, a tetrasaccharide is built on dolichol-P and then transferred to the S-layer glycoprotein. Then, the mannose fifth sugar is attached to a distinct molecule of dolichol-P and is transferred to the protein already carrying the tetrasaccharide. The pentasaccharide on Asn-47 was initially thought to contain mannose, galactose, glucose and idose with a relative ratio of 1/3/3/0.2. However, it was later shown that it is not the case. Under low-salt conditions (1.75 M instead of 3.4 M), a tetrasaccharide consisting of a sulfated hexose, 2 hexoses and rhamnose is attached to Asn-532.

It is found in the secreted. Its subcellular location is the cell wall. The protein resides in the S-layer. The protein localises to the cell membrane. Functionally, S-layer protein. The S-layer is a paracrystalline mono-layered assembly of proteins which coat the surface of the cell. This Haloferax volcanii (strain ATCC 29605 / DSM 3757 / JCM 8879 / NBRC 14742 / NCIMB 2012 / VKM B-1768 / DS2) (Halobacterium volcanii) protein is Cell surface glycoprotein (csg).